The primary structure comprises 313 residues: NADH-ubiquinone oxidoreductase chain 1 (313 aa).

Transmembrane regions (helical) follow at residues 7–27, 73–93, 104–124, 150–170, 175–195, 226–246, 250–270, and 293–313; these read LIGS…LTLL, IFYY…WMSM, LGVL…MVAG, LALI…LNFF, YMWF…SCLA, LIFL…SVIF, DIYS…FIWV, and MSLN…SMLF.

The protein belongs to the complex I subunit 1 family.

The protein localises to the mitochondrion inner membrane. It carries out the reaction a ubiquinone + NADH + 5 H(+)(in) = a ubiquinol + NAD(+) + 4 H(+)(out). Its function is as follows. Core subunit of the mitochondrial membrane respiratory chain NADH dehydrogenase (Complex I) that is believed to belong to the minimal assembly required for catalysis. Complex I functions in the transfer of electrons from NADH to the respiratory chain. The immediate electron acceptor for the enzyme is believed to be ubiquinone. This Aedes aegypti (Yellowfever mosquito) protein is NADH-ubiquinone oxidoreductase chain 1.